The following is a 294-amino-acid chain: Small ribosomal subunit protein uS2 (294 aa).

The interval 254 to 294 is disordered; sequence ESSNTEAPVAETAAAEAPVADAAIEAPVAEEAKTTEADDTK. Low complexity predominate over residues 259 to 282; sequence EAPVAETAAAEAPVADAAIEAPVA. Residues 283–294 are compositionally biased toward basic and acidic residues; that stretch reads EEAKTTEADDTK.

Belongs to the universal ribosomal protein uS2 family.

The sequence is that of Small ribosomal subunit protein uS2 from Renibacterium salmoninarum (strain ATCC 33209 / DSM 20767 / JCM 11484 / NBRC 15589 / NCIMB 2235).